A 543-amino-acid chain; its full sequence is MAAKDVKFGADARERMLRGVDILANAVKVTLGPKGRNVVLDKSFGAPRITKDGVSVAKEIELADKFENMGAQMVREVASKTNDIAGDGTTTATVLAQAIIREGAKAVAAGMNPMDLKRGIDKAVGVVVDQLKSNTKKITSPEEIAQVGTISANGETEIGEMIASAMQKVGSEGVITVEEAKGLHTELDVVEGMQFDRGYISPYFVTNPEKMTADLDSPYILIHEKKLSSLQPMLPLLESVVQSGRPLVIIAEDVDGEALATLVVNKLRGGLKIAAVKAPGFGDRRKAMLEDIAILTGGQVISEDIGIKLESVTLEMLGRAKKIHIEKENTTIVEGAGNSDDIKGRCNQIRAQIEETTSDYDREKLQERLAKLAGGVAVIRVGGSTEVEVKERKDRVDDALHATRAAVEEGIVPGGGTALARASSALKGLTFDNDDQRVGGEIVRKALQAPLRQIAFNAGEDGAVIAGKVLENEGYVFGFDAQKGEYKDLVAAGIIDPTKVVRTALQDAASVGGLLITTEAMVAERPEKKAPAAAPGGMGDMDF.

ATP-binding positions include 30–33 (TLGP), Lys-51, 87–91 (DGTTT), Gly-415, and Asp-496.

Belongs to the chaperonin (HSP60) family. In terms of assembly, forms a cylinder of 14 subunits composed of two heptameric rings stacked back-to-back. Interacts with the co-chaperonin GroES.

Its subcellular location is the cytoplasm. It catalyses the reaction ATP + H2O + a folded polypeptide = ADP + phosphate + an unfolded polypeptide.. In terms of biological role, together with its co-chaperonin GroES, plays an essential role in assisting protein folding. The GroEL-GroES system forms a nano-cage that allows encapsulation of the non-native substrate proteins and provides a physical environment optimized to promote and accelerate protein folding. In Gluconobacter oxydans (strain 621H) (Gluconobacter suboxydans), this protein is Chaperonin GroEL.